Here is a 1175-residue protein sequence, read N- to C-terminus: Tyrosine-protein phosphatase non-receptor type 21 (1175 aa).

Residues Leu-23–Gln-308 enclose the FERM domain. Over residues Tyr-395–Ile-421 the composition is skewed to polar residues. Positions Tyr-395–Tyr-445 are disordered. Phosphoserine occurs at positions 577, 589, 590, 637, 673, 710, 711, 798, 800, and 805. Residues Asp-663–Ser-702 are disordered. Positions Val-897–Phe-1168 constitute a Tyrosine-protein phosphatase domain. Residues Glu-1068, Cys-1109 to Arg-1115, and Gln-1153 contribute to the substrate site. Cys-1109 serves as the catalytic Phosphocysteine intermediate.

Belongs to the protein-tyrosine phosphatase family. Non-receptor class subfamily. As to expression, particularly abundantly in adrenal glands.

The protein resides in the cytoplasm. The protein localises to the cytoskeleton. The enzyme catalyses O-phospho-L-tyrosyl-[protein] + H2O = L-tyrosyl-[protein] + phosphate. This is Tyrosine-protein phosphatase non-receptor type 21 (Ptpn21) from Rattus norvegicus (Rat).